Consider the following 324-residue polypeptide: tRNA pseudouridine synthase B (324 aa).

Asp49 (nucleophile) is an active-site residue.

The protein belongs to the pseudouridine synthase TruB family. Type 1 subfamily.

It carries out the reaction uridine(55) in tRNA = pseudouridine(55) in tRNA. Responsible for synthesis of pseudouridine from uracil-55 in the psi GC loop of transfer RNAs. The protein is tRNA pseudouridine synthase B of Tolumonas auensis (strain DSM 9187 / NBRC 110442 / TA 4).